Consider the following 1275-residue polypeptide: Inner capsid protein lambda-1 (1275 aa).

Basic residues predominate over residues 1 to 12 (MKRIPRKTRGKS). A disordered region spans residues 1–147 (MKRIPRKTRG…NVDNEGGDNQ (147 aa)). Residues 18-35 (DSTERADDGSAQLRDKQS) are compositionally biased toward basic and acidic residues. Polar residues predominate over residues 55–66 (TRPSLQTVQKAT). Basic and acidic residues-rich tracts occupy residues 80–98 (AVDK…HVEA) and 105–117 (ATKR…DKQK). Over residues 118–139 (AQVTYNDTGINNANELSRSGNV) the composition is skewed to polar residues. The segment at 181–203 (YQCHVCSAVLFSPLDLDAHVASH) adopts a C2H2-type zinc-finger fold.

Belongs to the turreted BTV-fold inner capsid family. Homodecamer; each decamer is made up of two conformers of VP2, called VP2A and VP2B. 12 homodecamers assemble to form an icosahedral capsid. Interacts with protein mu-NS; in viral inclusions. Requires Mg(2+) as cofactor. Mn(2+) is required as a cofactor.

Its subcellular location is the virion. The catalysed reaction is ATP + H2O = ADP + phosphate + H(+). In terms of biological role, inner capsid protein that self-assembles to form an icosahedral capsid with a T=2 symmetry, which consists of 120 copies of VP2, with channels at each of its five-fold vertices. This capsid constitutes the innermost concentric layer of the viral mature particle. Functionally, displays NTPase, RNA 5'-triphosphatase (RTPase) and RNA helicase activities and probably participates in transcription of the viral genome. Helicase activity might be involved in unwinding or reannealing dsRNA during RNA synthesis. RTPase enzymatic activity represents the first step in RNA capping, which yields a 5'-diphosphorylated plus-strand RNA. The polypeptide is Inner capsid protein lambda-1 (Reovirus type 2 (strain D5/Jones) (T2J)).